Reading from the N-terminus, the 316-residue chain is 4-hydroxy-3-methylbut-2-enyl diphosphate reductase (316 aa).

Cysteine 12 is a [4Fe-4S] cluster binding site. The (2E)-4-hydroxy-3-methylbut-2-enyl diphosphate site is built by histidine 41 and histidine 74. Dimethylallyl diphosphate contacts are provided by histidine 41 and histidine 74. Histidine 41 and histidine 74 together coordinate isopentenyl diphosphate. Cysteine 96 is a binding site for [4Fe-4S] cluster. Histidine 124 contributes to the (2E)-4-hydroxy-3-methylbut-2-enyl diphosphate binding site. Histidine 124 contributes to the dimethylallyl diphosphate binding site. Histidine 124 lines the isopentenyl diphosphate pocket. Glutamate 126 (proton donor) is an active-site residue. Position 169 (threonine 169) interacts with (2E)-4-hydroxy-3-methylbut-2-enyl diphosphate. Cysteine 199 serves as a coordination point for [4Fe-4S] cluster. (2E)-4-hydroxy-3-methylbut-2-enyl diphosphate is bound by residues serine 227, serine 228, asparagine 229, and serine 271. The dimethylallyl diphosphate site is built by serine 227, serine 228, asparagine 229, and serine 271. Isopentenyl diphosphate-binding residues include serine 227, serine 228, asparagine 229, and serine 271.

Belongs to the IspH family. [4Fe-4S] cluster is required as a cofactor.

The catalysed reaction is isopentenyl diphosphate + 2 oxidized [2Fe-2S]-[ferredoxin] + H2O = (2E)-4-hydroxy-3-methylbut-2-enyl diphosphate + 2 reduced [2Fe-2S]-[ferredoxin] + 2 H(+). The enzyme catalyses dimethylallyl diphosphate + 2 oxidized [2Fe-2S]-[ferredoxin] + H2O = (2E)-4-hydroxy-3-methylbut-2-enyl diphosphate + 2 reduced [2Fe-2S]-[ferredoxin] + 2 H(+). It participates in isoprenoid biosynthesis; dimethylallyl diphosphate biosynthesis; dimethylallyl diphosphate from (2E)-4-hydroxy-3-methylbutenyl diphosphate: step 1/1. It functions in the pathway isoprenoid biosynthesis; isopentenyl diphosphate biosynthesis via DXP pathway; isopentenyl diphosphate from 1-deoxy-D-xylulose 5-phosphate: step 6/6. In terms of biological role, catalyzes the conversion of 1-hydroxy-2-methyl-2-(E)-butenyl 4-diphosphate (HMBPP) into a mixture of isopentenyl diphosphate (IPP) and dimethylallyl diphosphate (DMAPP). Acts in the terminal step of the DOXP/MEP pathway for isoprenoid precursor biosynthesis. The sequence is that of 4-hydroxy-3-methylbut-2-enyl diphosphate reductase from Vibrio vulnificus (strain CMCP6).